The sequence spans 387 residues: Dual-specificity RNA methyltransferase RlmN (387 aa).

Glu110 functions as the Proton acceptor in the catalytic mechanism. Positions 117 to 349 (VGKAGALCVS…NRAGYASPIR (233 aa)) constitute a Radical SAM core domain. A disulfide bridge links Cys124 with Cys360. Cys131, Cys135, and Cys138 together coordinate [4Fe-4S] cluster. S-adenosyl-L-methionine-binding positions include 186-187 (GE), Ser218, 240-242 (SLH), and Asn317. The active-site S-methylcysteine intermediate is Cys360.

This sequence belongs to the radical SAM superfamily. RlmN family. [4Fe-4S] cluster is required as a cofactor.

The protein resides in the cytoplasm. It catalyses the reaction adenosine(2503) in 23S rRNA + 2 reduced [2Fe-2S]-[ferredoxin] + 2 S-adenosyl-L-methionine = 2-methyladenosine(2503) in 23S rRNA + 5'-deoxyadenosine + L-methionine + 2 oxidized [2Fe-2S]-[ferredoxin] + S-adenosyl-L-homocysteine. The catalysed reaction is adenosine(37) in tRNA + 2 reduced [2Fe-2S]-[ferredoxin] + 2 S-adenosyl-L-methionine = 2-methyladenosine(37) in tRNA + 5'-deoxyadenosine + L-methionine + 2 oxidized [2Fe-2S]-[ferredoxin] + S-adenosyl-L-homocysteine. Functionally, specifically methylates position 2 of adenine 2503 in 23S rRNA and position 2 of adenine 37 in tRNAs. m2A2503 modification seems to play a crucial role in the proofreading step occurring at the peptidyl transferase center and thus would serve to optimize ribosomal fidelity. This chain is Dual-specificity RNA methyltransferase RlmN, found in Hyphomonas neptunium (strain ATCC 15444).